Consider the following 541-residue polypeptide: Exopolysaccharide phosphotransferase SCO6021 (541 aa).

This sequence belongs to the stealth family.

In Streptomyces coelicolor (strain ATCC BAA-471 / A3(2) / M145), this protein is Exopolysaccharide phosphotransferase SCO6021.